The sequence spans 45 residues: uncharacterized protein (45 aa).

This is an uncharacterized protein from Xylella fastidiosa (strain Temecula1 / ATCC 700964).